Here is a 92-residue protein sequence, read N- to C-terminus: MSRSLKKGPFVADHLLKKVEKLNAQNDKKVITTWSRASTIVPVMIGHTIAVHNGREHIPVFVTDQMVGHKLGEFAPTRTFRGHKNSDKKAKR.

The protein belongs to the universal ribosomal protein uS19 family.

The protein localises to the plastid. It is found in the chloroplast. In terms of biological role, protein S19 forms a complex with S13 that binds strongly to the 16S ribosomal RNA. This chain is Small ribosomal subunit protein uS19c, found in Oltmannsiellopsis viridis (Marine flagellate).